The primary structure comprises 357 residues: Guanine nucleotide-binding protein alpha-2 subunit (357 aa).

G2 carries the N-myristoyl glycine lipid modification. C4 carries S-palmitoyl cysteine lipidation. A G-alpha domain is found at 30–356 (NEVKLLLLGA…TQCVMKAGLY (327 aa)). Positions 33–46 (KLLLLGAGESGKST) are G1 motif. Residues E41, S42, G43, K44, S45, and T46 each contribute to the GTP site. S45 contributes to the Mg(2+) binding site. S113 is modified (phosphoserine). GTP-binding residues include D154, L179, T185, G207, N272, K273, D275, and A328. A G2 motif region spans residues 177 to 185 (DILHTRVMT). Mg(2+) is bound at residue T185. Residues 200–209 (FRLVDVGGQR) form a G3 motif region. A G4 motif region spans residues 268-275 (ILFLNKSD). The interval 326 to 331 (TCATDT) is G5 motif.

It belongs to the G-alpha family. As to quaternary structure, g proteins are composed of 3 units; alpha, beta and gamma. The alpha chain contains the guanine nucleotide binding site. Interacts with the RAP guanine nucleotide exchange factor glfB. Requires Mg(2+) as cofactor. Ser-113 is transiently phosphorylated following stimulation with extracellular cAMP.

Guanine nucleotide-binding proteins (G proteins) are involved as modulators or transducers in various transmembrane signaling systems. G alpha-2 is required for the early aggregation process and most of the known cAMP receptor-mediated responses. Interacts with downstream effector gflB, a Rap guanine nucleotide exchange factor, to regulate the balance between Ras and Rap signaling at the leading edge of chemotaxing cells. This chain is Guanine nucleotide-binding protein alpha-2 subunit (gpaB), found in Dictyostelium discoideum (Social amoeba).